A 185-amino-acid polypeptide reads, in one-letter code: Monooxygenase hypC (185 aa).

The next 3 membrane-spanning stretches (helical) occupy residues threonine 35 to leucine 55, glycine 75 to tyrosine 95, and proline 106 to alanine 126. N-linked (GlcNAc...) asparagine glycosylation is present at asparagine 129. Residues alanine 165–phenylalanine 185 form a helical membrane-spanning segment.

Belongs to the anthrone oxygenase family.

It localises to the membrane. Its pathway is mycotoxin biosynthesis. In terms of biological role, monooxygenase; part of the fragmented gene cluster that mediates the biosynthesis of dothistromin (DOTH), a polyketide toxin very similar in structure to the aflatoxin precursor, versicolorin B. The first step of the pathway is the conversion of acetate to norsolorinic acid (NOR) and requires the fatty acid synthase subunits hexA and hexB, as well as the polyketide synthase pksA. PksA combines a hexanoyl starter unit and 7 malonyl-CoA extender units to synthesize the precursor NOR. The hexanoyl starter unit is provided to the acyl-carrier protein (ACP) domain by the fungal fatty acid synthase hexA/hexB. The second step is the conversion of NOR to averantin (AVN) and requires the norsolorinic acid ketoreductase nor1, which catalyzes the dehydration of norsolorinic acid to form (1'S)-averantin. The cytochrome P450 monooxygenase avnA then catalyzes the hydroxylation of AVN to 5'hydroxyaverantin (HAVN). The next step is performed by adhA that transforms HAVN to averufin (AVF). Averufin might then be converted to hydroxyversicolorone by cypX and avfA. Hydroxyversicolorone is further converted versiconal hemiacetal acetate (VHA) by moxY. VHA is then the substrate for the versiconal hemiacetal acetate esterase est1 to yield versiconal (VAL). Versicolorin B synthase vbsA then converts VAL to versicolorin B (VERB) by closing the bisfuran ring. Then, the activity of the versicolorin B desaturase verB leads to versicolorin A (VERA). DotB, a predicted chloroperoxidase, may perform epoxidation of the A-ring of VERA. Alternatively, a cytochrome P450, such as cypX or avnA could catalyze this step. It is also possible that another, uncharacterized, cytochrome P450 enzyme is responsible for this step. Opening of the epoxide could potentially be achieved by the epoxide hydrolase epoA. However, epoA seems not to be required for DOTH biosynthesis, but other epoxide hydrolases may have the ability to complement this hydrolysis. Alternatively, opening of the epoxide ring could be achieved non-enzymatically. The next step is the deoxygenation of ring A to yield the 5,8-dihydroxyanthraquinone which is most likely catalyzed by the NADPH dehydrogenase encoded by ver1. The last stages of DOTH biosynthesis are proposed to involve hydroxylation of the bisfuran. OrdB and norB might have oxidative roles here. An alternative possibility is that cytochrome P450 monoogenases such as avnA and cypX might perform these steps in addition to previously proposed steps. The polypeptide is Monooxygenase hypC (Dothistroma septosporum (strain NZE10 / CBS 128990) (Red band needle blight fungus)).